Here is a 184-residue protein sequence, read N- to C-terminus: Probable DNA-directed RNA polymerase subunit delta (184 aa).

In terms of domain architecture, HTH HARE-type spans 14 to 81 (LSMIEVARAI…GENVWALRSW (68 aa)). Disordered regions lie at residues 88–107 (DEEV…KHHK) and 118–184 (GDDD…DEDD). Over residues 118–164 (GDDDIIDYDNDDPEDDDLDAATDDSDDDYSDDDSDYDEDNDDADDVL) the composition is skewed to acidic residues.

This sequence belongs to the RpoE family. In terms of assembly, RNAP is composed of a core of 2 alpha, a beta and a beta' subunits. The core is associated with a delta subunit and one of several sigma factors.

Its function is as follows. Participates in both the initiation and recycling phases of transcription. In the presence of the delta subunit, RNAP displays an increased specificity of transcription, a decreased affinity for nucleic acids, and an increased efficiency of RNA synthesis because of enhanced recycling. The chain is Probable DNA-directed RNA polymerase subunit delta from Lactobacillus acidophilus (strain ATCC 700396 / NCK56 / N2 / NCFM).